Consider the following 314-residue polypeptide: Homeobox protein knotted-1-like 3 (314 aa).

The region spanning 218–238 (ELKIELKQGFKSRIEDVREEI) is the ELK domain. Positions 239 to 302 (LRKRRAGKLP…NQRKRNWHNN (64 aa)) form a DNA-binding region, homeobox; TALE-type.

This sequence belongs to the TALE/KNOX homeobox family. As to expression, isoform 1 is expressed in roots and flowers, and at lower levels in leaf blades and leaf sheaths. Isoform 2 is expressed in roots and flowers.

The protein resides in the nucleus. In Oryza sativa subsp. japonica (Rice), this protein is Homeobox protein knotted-1-like 3 (HOS66).